Consider the following 209-residue polypeptide: tRNA (guanine-N(7)-)-methyltransferase (209 aa).

Residues D35, E60, N87, and D113 each coordinate S-adenosyl-L-methionine. Residue D113 is part of the active site. Residues K117 and D149 each coordinate substrate.

This sequence belongs to the class I-like SAM-binding methyltransferase superfamily. TrmB family.

It catalyses the reaction guanosine(46) in tRNA + S-adenosyl-L-methionine = N(7)-methylguanosine(46) in tRNA + S-adenosyl-L-homocysteine. It participates in tRNA modification; N(7)-methylguanine-tRNA biosynthesis. Functionally, catalyzes the formation of N(7)-methylguanine at position 46 (m7G46) in tRNA. The protein is tRNA (guanine-N(7)-)-methyltransferase of Prochlorococcus marinus (strain AS9601).